A 471-amino-acid polypeptide reads, in one-letter code: Alpha-galactosidase 5 (471 aa).

The signal sequence occupies residues 1–18 (MFAFYFLTACTTLKGVFG). A disulfide bridge connects residues Cys42 and Cys74. The substrate site is built by Asp72 and Asp73. Asn105 carries an N-linked (GlcNAc...) asparagine glycan. Cys121 and Cys151 are joined by a disulfide. Residue Lys147 participates in substrate binding. Residue Asp149 is the Nucleophile of the active site. Residue Asn175 is glycosylated (N-linked (GlcNAc...) asparagine). Arg205 contributes to the substrate binding site. Asp209 functions as the Proton donor in the catalytic mechanism. 2 cysteine pairs are disulfide-bonded: Cys221/Cys237 and Cys223/Cys230. A substrate-binding site is contributed by Gln251. Asn270, Asn370, Asn403, Asn422, Asn435, and Asn454 each carry an N-linked (GlcNAc...) asparagine glycan.

Belongs to the glycosyl hydrolase 27 family. In terms of assembly, homotetramer.

The protein localises to the secreted. The catalysed reaction is Hydrolysis of terminal, non-reducing alpha-D-galactose residues in alpha-D-galactosides, including galactose oligosaccharides, galactomannans and galactolipids.. The sequence is that of Alpha-galactosidase 5 (MEL5) from Saccharomyces cerevisiae (Baker's yeast).